An 883-amino-acid polypeptide reads, in one-letter code: Glutamate receptor 2 (883 aa).

The N-terminal stretch at 1–24 is a signal peptide; sequence MQKIMHISVLLSPVLWGLIFGVSS. Residues 25-543 lie on the Extracellular side of the membrane; the sequence is NSIQIGGLFP…GVFSFLDPLA (519 aa). Cysteines 78 and 330 form a disulfide. Residues Asn-256, Asn-370, Asn-406, and Asn-413 are each glycosylated (N-linked (GlcNAc...) asparagine). Positions 499, 501, and 506 each coordinate L-glutamate. Residues 544 to 564 form a helical membrane-spanning segment; that stretch reads YEIWMCIVFAYIGVSVVLFLV. At 565-591 the chain is on the cytoplasmic side; the sequence is SRFSPYEWHTEEFEDGRETQSSESTNE. Positions 592-607 form an intramembrane region, helical; Pore-forming; the sequence is FGIFNSLWFSLGAFMQ. An intramembrane segment occupies 608–610; the sequence is QGC. Residue Cys-610 is the site of S-palmitoyl cysteine attachment. Over 611-616 the chain is Cytoplasmic; that stretch reads DISPRS. The chain crosses the membrane as a helical span at residues 617-637; it reads LSGRIVGGVWWFFTLIIISSY. Over 638 to 812 the chain is Extracellular; it reads TANLAAFLTV…EKTSALSLSN (175 aa). L-glutamate is bound by residues Ser-675 and Thr-676. Ser-683 carries the phosphoserine; by PKC modification. Ser-717 is subject to Phosphoserine; by PKG. Glu-726 provides a ligand contact to L-glutamate. An intrachain disulfide couples Cys-739 to Cys-794. A helical membrane pass occupies residues 813-833; sequence VAGVFYILVGGLGLAMLVALI. Residues 834 to 883 are Cytoplasmic-facing; sequence EFCYKSRAEAKRMKVAKNAQNINPSSSQNSQNFATYKEGYNVYGIESVKI. Residue Cys-836 is the site of S-palmitoyl cysteine attachment. Phosphoserine is present on residues Ser-860 and Ser-863. Residues 867–877 are required for interaction with IQSEC1; sequence ATYKEGYNVYG. Tyr-876 carries the phosphotyrosine modification. Residue Ser-880 is modified to Phosphoserine.

The protein belongs to the glutamate-gated ion channel (TC 1.A.10.1) family. GRIA2 subfamily. Homotetramer or heterotetramer of pore-forming glutamate receptor subunits. Tetramers may be formed by the dimerization of dimers. May interact with MPP4. Forms a ternary complex with GRIP1 and CSPG4. Interacts with ATAD1 in an ATP-dependent manner. ATAD1-catalyzed ATP hydrolysis disrupts binding to ATAD1 and to GRIP1 and leads to AMPAR complex disassembly. Interacts with GRIP1 and GRIP2. Interacts with NSF via its C-terminus. Isoform 1, but not isoform 3, interacts with PICK1. Interacts with CACNG2. Interacts with GRIA1 and SYNDIG1. Part of a complex containing GRIA2, NSF and NAPA and/or NAPB. Interacts with SNX27 (via PDZ domain); the interaction is required for recycling to the plasma membrane when endocytosed and prevent degradation in lysosomes. Interacts with LRFN1. Found in a complex with GRIA1, GRIA3, GRIA4, CNIH2, CNIH3, CACNG2, CACNG3, CACNG4, CACNG5, CACNG7 and CACNG8. Interacts with CACNG5. Interacts with OLFM2. Interacts with AP4B1, AP4E1 and AP4M1; probably indirect it mediates the somatodendritic localization of GRIA2 in neurons. Forms a complex with GRIP1, NSG1 and STX12; controls the intracellular fate of AMPAR and the endosomal sorting of the GRIA2 subunit toward recycling and membrane targeting. Interacts with IQSEC1; the interaction is required for ARF6 activation. Interacts (heterotetramer form) with CNIH2 and CNIH3; this interaction promotes expression at the plasma membrane and extensively modulates their gating properties by slowing deactivation and desensitization kinetics. Palmitoylated. Depalmitoylated upon L-glutamate stimulation. Cys-610 palmitoylation leads to Golgi retention and decreased cell surface expression. In contrast, Cys-836 palmitoylation does not affect cell surface expression but regulates stimulation-dependent endocytosis. Post-translationally, ubiquitinated by RNF167, leading to its degradation. In terms of processing, phosphorylation at Tyr-876 is required for interaction with IQSEC1 and ARF6 activation, which in turn triggers AMPAR internalization for persistent synaptic depression. N-glycosylated.

It is found in the cell membrane. Its subcellular location is the postsynaptic cell membrane. The protein resides in the postsynaptic density membrane. The catalysed reaction is Ca(2+)(in) = Ca(2+)(out). It catalyses the reaction Na(+)(in) = Na(+)(out). Functionally, ionotropic glutamate receptor that functions as a ligand-gated cation channel, gated by L-glutamate and glutamatergic agonists such as alpha-amino-3-hydroxy-5-methyl-4-isoxazolepropionic acid (AMPA), quisqualic acid, and kainic acid. L-glutamate acts as an excitatory neurotransmitter at many synapses in the central nervous system and plays an important role in fast excitatory synaptic transmission. Binding of the excitatory neurotransmitter L-glutamate induces a conformation change, leading to the opening of the cation channel, and thereby converts the chemical signal to an electrical impulse upon entry of monovalent and divalent cations such as sodium and calcium. The receptor then desensitizes rapidly and enters in a transient inactive state, characterized by the presence of bound agonist. In the presence of CACNG4 or CACNG7 or CACNG8, shows resensitization which is characterized by a delayed accumulation of current flux upon continued application of L-glutamate. Through complex formation with NSG1, GRIP1 and STX12 controls the intracellular fate of AMPAR and the endosomal sorting of the GRIA2 subunit toward recycling and membrane targeting. The protein is Glutamate receptor 2 of Homo sapiens (Human).